The following is a 209-amino-acid chain: Large ribosomal subunit protein uL4 (209 aa).

The disordered stretch occupies residues 44–77; sequence QRQGTHKSKERSEVSGSTRKLIRQKGGGGARRGD.

The protein belongs to the universal ribosomal protein uL4 family. As to quaternary structure, part of the 50S ribosomal subunit.

One of the primary rRNA binding proteins, this protein initially binds near the 5'-end of the 23S rRNA. It is important during the early stages of 50S assembly. It makes multiple contacts with different domains of the 23S rRNA in the assembled 50S subunit and ribosome. In terms of biological role, forms part of the polypeptide exit tunnel. This Parabacteroides distasonis (strain ATCC 8503 / DSM 20701 / CIP 104284 / JCM 5825 / NCTC 11152) protein is Large ribosomal subunit protein uL4.